The chain runs to 394 residues: Dimethyladenosine transferase 2, mitochondrial (394 aa).

Residues Met-1 to Arg-19 constitute a mitochondrion transit peptide. Residues Val-75, Glu-123, and Asp-149 each coordinate S-adenosyl-L-methionine. The segment at Lys-326–Arg-327 is DNA-binding.

The protein belongs to the class I-like SAM-binding methyltransferase superfamily. rRNA adenine N(6)-methyltransferase family. KsgA subfamily. In terms of assembly, homodimer. Component of the mitochondrial transcription initiation complex, composed at least of TFB2M, TFAM and POLRMT. In this complex TFAM recruits POLRMT to the promoter whereas TFB2M induces structural changes in POLRMT to enable promoter opening and trapping of the DNA non-template strand. Interacts with mitochondrial RNA polymerase POLRMT. Interacts with TFAM.

It localises to the mitochondrion. It catalyses the reaction adenosine in rRNA + S-adenosyl-L-methionine = N(6)-methyladenosine in rRNA + S-adenosyl-L-homocysteine + H(+). In terms of biological role, S-adenosyl-L-methionine-dependent rRNA methyltransferase which may methylate two specific adjacent adenosines in the loop of a conserved hairpin near the 3'-end of 12S mitochondrial rRNA. Component of the mitochondrial transcription initiation complex, composed at least of TFB2M, TFAM and POLRMT that is required for basal transcription of mitochondrial DNA. In this complex TFAM recruits POLRMT to a specific promoter whereas TFB2M induces structural changes in POLRMT to enable promoter opening and trapping of the DNA non-template strand. Stimulates transcription independently of the methyltransferase activity. The protein is Dimethyladenosine transferase 2, mitochondrial of Bos taurus (Bovine).